Here is a 316-residue protein sequence, read N- to C-terminus: Mycothiol acetyltransferase (316 aa).

2 N-acetyltransferase domains span residues 16 to 153 (REVR…VPAV) and 156 to 316 (VRIR…PAAN). Residue E36 coordinates 1D-myo-inositol 2-(L-cysteinylamino)-2-deoxy-alpha-D-glucopyranoside. Residues 83–85 (LVV) and 91–96 (RRGIGS) each bind acetyl-CoA. 1D-myo-inositol 2-(L-cysteinylamino)-2-deoxy-alpha-D-glucopyranoside contacts are provided by E183, K228, and E238. Acetyl-CoA contacts are provided by residues 242–244 (VGV) and 249–255 (QGRGLGQ). 1D-myo-inositol 2-(L-cysteinylamino)-2-deoxy-alpha-D-glucopyranoside is bound at residue Y283. Position 288 to 293 (288 to 293 (NVAAVR)) interacts with acetyl-CoA.

The protein belongs to the acetyltransferase family. MshD subfamily. In terms of assembly, monomer.

It carries out the reaction 1D-myo-inositol 2-(L-cysteinylamino)-2-deoxy-alpha-D-glucopyranoside + acetyl-CoA = mycothiol + CoA + H(+). Functionally, catalyzes the transfer of acetyl from acetyl-CoA to desacetylmycothiol (Cys-GlcN-Ins) to form mycothiol. This is Mycothiol acetyltransferase from Mycolicibacterium paratuberculosis (strain ATCC BAA-968 / K-10) (Mycobacterium paratuberculosis).